Consider the following 252-residue polypeptide: Imidazole glycerol phosphate synthase subunit HisF (252 aa).

Residues Asp13 and Asp132 contribute to the active site.

Belongs to the HisA/HisF family. As to quaternary structure, heterodimer of HisH and HisF.

Its subcellular location is the cytoplasm. The catalysed reaction is 5-[(5-phospho-1-deoxy-D-ribulos-1-ylimino)methylamino]-1-(5-phospho-beta-D-ribosyl)imidazole-4-carboxamide + L-glutamine = D-erythro-1-(imidazol-4-yl)glycerol 3-phosphate + 5-amino-1-(5-phospho-beta-D-ribosyl)imidazole-4-carboxamide + L-glutamate + H(+). Its pathway is amino-acid biosynthesis; L-histidine biosynthesis; L-histidine from 5-phospho-alpha-D-ribose 1-diphosphate: step 5/9. IGPS catalyzes the conversion of PRFAR and glutamine to IGP, AICAR and glutamate. The HisF subunit catalyzes the cyclization activity that produces IGP and AICAR from PRFAR using the ammonia provided by the HisH subunit. The polypeptide is Imidazole glycerol phosphate synthase subunit HisF (Campylobacter hominis (strain ATCC BAA-381 / DSM 21671 / CCUG 45161 / LMG 19568 / NCTC 13146 / CH001A)).